Here is a 467-residue protein sequence, read N- to C-terminus: Geranylgeranyl diphosphate reductase, chloroplastic (467 aa).

The N-terminal 43 residues, 1-43 (MATTVTLKSFTGLRQSSTEQTNFVSHVPSSLSLPQRRTSLRVT), are a transit peptide targeting the chloroplast.

This sequence belongs to the geranylgeranyl reductase family. ChlP subfamily. As to quaternary structure, part of the FLU-containing chloroplast membrane complex composed of FLU, CRD1, PORB, PORC, CHLP and HEMA1.

The protein resides in the plastid. It is found in the chloroplast membrane. The enzyme catalyses phytyl diphosphate + 3 NADP(+) = geranylgeranyl diphosphate + 3 NADPH + 3 H(+). It participates in porphyrin-containing compound metabolism; chlorophyll biosynthesis. It functions in the pathway cofactor biosynthesis; tocopherol biosynthesis. Functionally, catalyzes the reduction of geranylgeranyl diphosphate to phytyl diphosphate, providing phytol for both tocopherol and chlorophyll synthesis. This Arabidopsis thaliana (Mouse-ear cress) protein is Geranylgeranyl diphosphate reductase, chloroplastic (CHLP).